A 183-amino-acid chain; its full sequence is Putative manganese efflux pump MntP 1 (183 aa).

6 consecutive transmembrane segments (helical) span residues 6–26, 36–56, 64–84, 100–120, 130–150, and 158–178; these read LFLL…CIGI, IIFV…GGYI, IVPI…ILMI, IMYL…GFTT, LFMS…LGII, and ISII…LFGL.

This sequence belongs to the MntP (TC 9.B.29) family.

It is found in the cell membrane. In terms of biological role, probably functions as a manganese efflux pump. The chain is Putative manganese efflux pump MntP 1 from Clostridium botulinum (strain Langeland / NCTC 10281 / Type F).